The primary structure comprises 505 residues: ATP synthase subunit alpha (505 aa).

170–177 (GDRQTGKT) is a binding site for ATP.

This sequence belongs to the ATPase alpha/beta chains family. As to quaternary structure, F-type ATPases have 2 components, CF(1) - the catalytic core - and CF(0) - the membrane proton channel. CF(1) has five subunits: alpha(3), beta(3), gamma(1), delta(1), epsilon(1). CF(0) has four main subunits: a(1), b(1), b'(1) and c(9-12).

The protein resides in the cellular thylakoid membrane. The enzyme catalyses ATP + H2O + 4 H(+)(in) = ADP + phosphate + 5 H(+)(out). In terms of biological role, produces ATP from ADP in the presence of a proton gradient across the membrane. The alpha chain is a regulatory subunit. The sequence is that of ATP synthase subunit alpha from Prochlorococcus marinus subsp. pastoris (strain CCMP1986 / NIES-2087 / MED4).